Reading from the N-terminus, the 688-residue chain is Subtilisin-like protease 1 (688 aa).

The first 25 residues, 1–25 (MMLNKKVVALCTLTLHLFCIFLCLG), serve as a signal peptide directing secretion. The propeptide at 26-217 (KEVRSEENGK…IESDKLVSAD (192 aa)) is inhibition peptide. The interval 99 to 129 (EKNKNDNHNNNNNNISSSSSSSSNTFGEEKE) is disordered. Low complexity predominate over residues 106–122 (HNNNNNNISSSSSSSSN). The N-linked (GlcNAc...) asparagine glycan is linked to N112. Ca(2+) is bound by residues N145, T148, and P150. N-linked (GlcNAc...) asparagine glycosylation occurs at N171. G205 serves as a coordination point for Ca(2+). Residue N261 is glycosylated (N-linked (GlcNAc...) asparagine). Disordered regions lie at residues 264 to 284 (HAAT…DTFS) and 303 to 332 (NNNN…RPGK). Positions 303–328 (NNNNYYYSHSSNGHNSSSRNSSSSRS) are enriched in low complexity. N-linked (GlcNAc...) asparagine glycosylation is found at N317 and N322. A Ca(2+)-binding site is contributed by D337. The 319-residue stretch at 343–661 (QWGLDLSRLD…AGYADINKAV (319 aa)) folds into the Peptidase S8 domain. 2 cysteine pairs are disulfide-bonded: C369-C479 and C458-C475. The Charge relay system role is filled by D372. 11 residues coordinate Ca(2+): D381, E392, R396, F399, D400, D401, D402, N404, I406, D408, and D409. N-linked (GlcNAc...) asparagine glycosylation occurs at N417. H428 serves as the catalytic Charge relay system. Residues I439, N442, I444, and V446 each coordinate Ca(2+). 3 N-linked (GlcNAc...) asparagine glycosylation sites follow: N488, N501, and N520. The cysteines at positions 521 and 534 are disulfide-linked. N-linked (GlcNAc...) asparagine glycosylation is present at N603. Residue S606 is the Charge relay system of the active site. N-linked (GlcNAc...) asparagine glycosylation is present at N675.

Belongs to the peptidase S8 family. As to quaternary structure, heterodimer between p54 form and prodomain p31; the interaction inhibits p54 catalytic activity. Heterodimer p31-p54 is monomeric at basic pH and dimeric at acidic pH; dimerization is driven by the N-terminal prodomain (p31). The cofactor is Ca(2+). Post-translationally, the prodomain (p31) is cleaved, probably by autocatalysis, during the transport to or in the Golgi apparatus, and remains non-covalently associated with the p54 form as an inhibitor. p54 is further cleaved into the p47 form. The p54-to-p47 conversion can be also autocatalytic. This cleavage is likely occurring in the exoneme prior to egress and is mediated by PMX/plasmepsin X. Heterodimer p31-p54 is activated by cleavage of prodomain (p31) by the aspartic protease PMX; cleavage by PMX abolishes inhibitory capacity of p31. Primary autocatalytic processing of SUB1 is essential for parasite growth; the p54-to-p47 conversion is dispensable for SUB1 functions in the parasites. In terms of processing, the disulfide bond between Cys-521 and Cys-534 acts as a redox-sensitive disulfide switch. The oxidized form is required for catalytic activity. The relevance of the N-glycosylation is not clear. In an insect expression system, SUB1 glycosylation appears to affect its processing into the active mature form suggesting that SUB1 may not be N-glycosylated in parasites.

Its subcellular location is the secreted. It is found in the parasitophorous vacuole lumen. It carries out the reaction Hydrolysis of proteins with broad specificity for peptide bonds, and a preference for a large uncharged residue in P1. Hydrolyzes peptide amides.. Its activity is regulated as follows. p54 and probably p47 forms are inhibited by the non-covalent interaction with the cleaved propeptide. Inhibited by subtilisin propeptide-like protein SUB1-ProM. Inhibited by small molecule MRT12113. In terms of biological role, serine protease which plays an essential role in merozoite invasion of and egress from host erythrocytes by processing and activating various merozoite surface and parasitophorous vacuole proteins. Mediates the proteolytic maturation of serine proteases SERA4, SERA5 and SERA6 just prior to merozoite egress. Prior to merozoite egress, cleaves merozoite surface proteins MSP1, MSP6 and MSP7, which form the MSP1/6/7 complex, and thereby may prime the parasite cell surface for invasion of fresh erythrocytes. Prior to merozoite egress, cleaves MSRP2 converting it to MSRP2 p25 form, and RAP1 converting it to RAP1 p67 form. The polypeptide is Subtilisin-like protease 1 (Plasmodium falciparum (isolate 3D7)).